The following is a 142-amino-acid chain: Large ribosomal subunit protein uL11 (142 aa).

It belongs to the universal ribosomal protein uL11 family. As to quaternary structure, part of the ribosomal stalk of the 50S ribosomal subunit. Interacts with L10 and the large rRNA to form the base of the stalk. L10 forms an elongated spine to which L12 dimers bind in a sequential fashion forming a multimeric L10(L12)X complex. In terms of processing, one or more lysine residues are methylated.

Forms part of the ribosomal stalk which helps the ribosome interact with GTP-bound translation factors. The polypeptide is Large ribosomal subunit protein uL11 (Erwinia tasmaniensis (strain DSM 17950 / CFBP 7177 / CIP 109463 / NCPPB 4357 / Et1/99)).